The chain runs to 664 residues: E3 ubiquitin-protein ligase RNF139 (664 aa).

An N-acetylalanine modification is found at Ala-2. 12 helical membrane-spanning segments follow: residues 51 to 71, 85 to 105, 125 to 145, 154 to 174, 178 to 198, 293 to 313, 323 to 343, 356 to 376, 390 to 410, 420 to 440, 469 to 489, and 495 to 512; these read IVLQ…VLIL, AFLL…HIDF, SLWM…VTLL, LIIL…PLHI, LVFT…AVKL, GMSA…LAFI, LGFV…LSGL, MCLL…PVLM, FPVL…SYVL, LFAA…SLTV, SIIV…TMMF, and IRAF…YLQA. An RING-type; atypical zinc finger spans residues 547–586; sequence CAICYHEFTTSARITPCNHYFHALCLRKWLYIQDTCPMCH. Polar residues predominate over residues 599–610; the sequence is SNVSNNNGFTPP. Residues 599 to 664 form a disordered region; that stretch reads SNVSNNNGFT…AAEEFNDDTD (66 aa). Over residues 616 to 628 the composition is skewed to basic and acidic residues; that stretch reads EAVREAAAESDRE. The span at 629–639 shows a compositional bias: acidic residues; that stretch reads LNEDDSTDCDD. Phosphoserine is present on Ser-634. 2 positions are modified to phosphothreonine: Thr-635 and Thr-663.

As to quaternary structure, interacts with VHL. Interacts with MHC class I and HM13. Component of SCAP-SREBP complex composed of SREBF2, SCAP and RNF139; the complex hampers the interaction between SCAP and SEC24B, thereby reducing SREBF2 proteolytic processing. Interacts with SREBF2 (via C-terminal domain). Interacts with SCAP; the interaction inhibits the interaction of SCAP with SEC24B and hampering the ER to Golgi transport of the SCAP-SREBP complex. Interacts with SEC24B. Interacts with INSIG1 and INSIG2. Interacts with EIF3F and EIF3H; the interaction leads to protein translation inhibitions in a ubiquitination-dependent manner. Interacts with XBP1; the interaction induces ubiquitination and degradation of XBP1. Interacts with AUP1, AMFR and UBE2G2; interaction with AUP1 facilitates interaction of RNF139 with ubiquitin-conjugating enzyme UBE2G2 and ubiquitin ligase AMFR/gp78, leading to sterol-induced ubiquitination of HMGCR and its subsequent proteasomal degradation. Post-translationally, autoubiquitinated. Ubiquitination is induced by sterol and leads to ist degradation via the ubiquitin-proteasome pathway.

Its subcellular location is the endoplasmic reticulum membrane. The catalysed reaction is S-ubiquitinyl-[E2 ubiquitin-conjugating enzyme]-L-cysteine + [acceptor protein]-L-lysine = [E2 ubiquitin-conjugating enzyme]-L-cysteine + N(6)-ubiquitinyl-[acceptor protein]-L-lysine.. It functions in the pathway protein modification; protein ubiquitination. Its function is as follows. E3-ubiquitin ligase; acts as a negative regulator of cell proliferation through mechanisms involving G2/M arrest and cell death. Required for MHC class I ubiquitination in cells expressing the cytomegalovirus protein US2 before dislocation from the endoplasmic reticulum (ER). Affects SREBP processing by hindering the SREBP-SCAP complex translocation from the ER to the Golgi, thereby reducing SREBF2 target gene expression. Involved in the sterol-accelerated degradation of HMGCR. This is achieved through binding to INSIG1 and/or INSIG2 at the ER membrane. In addition, interaction of RNF139 with AUP1 facilitates interaction of RNF139 with ubiquitin-conjugating enzyme UBE2G2 and ubiquitin ligase AMFR, leading to ubiquitination of HMGCR. The ubiquitinated HMGCR is then released from the ER by the complex into the cytosol for subsequent destruction. Required for INSIG1 ubiquitination. May be required for EIF3 complex ubiquitination. The protein is E3 ubiquitin-protein ligase RNF139 (RNF139) of Pongo abelii (Sumatran orangutan).